The chain runs to 374 residues: Alanine racemase (374 aa).

Lys-40 serves as the catalytic Proton acceptor; specific for D-alanine. Lys-40 is modified (N6-(pyridoxal phosphate)lysine). Arg-136 provides a ligand contact to substrate. Residue Tyr-264 is the Proton acceptor; specific for L-alanine of the active site. Residue Met-311 participates in substrate binding.

This sequence belongs to the alanine racemase family. Pyridoxal 5'-phosphate is required as a cofactor.

The enzyme catalyses L-alanine = D-alanine. Its pathway is amino-acid biosynthesis; D-alanine biosynthesis; D-alanine from L-alanine: step 1/1. Functionally, catalyzes the interconversion of L-alanine and D-alanine. May also act on other amino acids. The polypeptide is Alanine racemase (alr) (Pediococcus pentosaceus (strain ATCC 25745 / CCUG 21536 / LMG 10740 / 183-1w)).